Consider the following 304-residue polypeptide: MTEQNQQPKTYCGFIAIVGRPNVGKSTLLNKILGQKISITSRKAQTTRHRIVGIHTEDQYQAIYVDTPGLHIEEKRAINRLMNRAASSAIGDVDLIIFVVEGTKWTDDDEMVLNKLRSAKAPVVLAINKVDNIKEKDELLPHITELSQKFDFAEILPISAQRGKNVHILQKIVRKSLREGVHHFPEEYVTDRSQRFMASEIIREKLMRFTGEELPYSVTVEIEQFKLNERGTYEINGLILVEREGQKKMVIGAKGQKIKTIGMEARADMERLFDNKVHLELWVKVKAGWADDERALRSLGYMDE.

In terms of domain architecture, Era-type G spans 11–179; the sequence is YCGFIAIVGR…QKIVRKSLRE (169 aa). Positions 19–26 are G1; it reads GRPNVGKS. GTP is bound at residue 19–26; that stretch reads GRPNVGKS. Positions 45–49 are G2; the sequence is QTTRH. The segment at 66 to 69 is G3; that stretch reads DTPG. GTP-binding positions include 66 to 70 and 128 to 131; these read DTPGL and NKVD. Residues 128-131 form a G4 region; sequence NKVD. The interval 158-160 is G5; that stretch reads ISA. Residues 210-287 form the KH type-2 domain; the sequence is TGEELPYSVT…HLELWVKVKA (78 aa).

This sequence belongs to the TRAFAC class TrmE-Era-EngA-EngB-Septin-like GTPase superfamily. Era GTPase family. Monomer.

The protein resides in the cytoplasm. It localises to the cell inner membrane. Its function is as follows. An essential GTPase that binds both GDP and GTP, with rapid nucleotide exchange. Plays a role in 16S rRNA processing and 30S ribosomal subunit biogenesis and possibly also in cell cycle regulation and energy metabolism. This Actinobacillus pleuropneumoniae serotype 5b (strain L20) protein is GTPase Era.